The following is a 349-amino-acid chain: Protein-glutamate methylesterase/protein-glutamine glutaminase (349 aa).

The region spanning 5 to 122 is the Response regulatory domain; sequence RVLCVDDSAL…REGMLAYSEL (118 aa). A 4-aspartylphosphate modification is found at Asp-56. The 193-residue stretch at 152-344 folds into the CheB-type methylesterase domain; the sequence is LLSSEKLIAI…QRMLAQISSG (193 aa). Active-site residues include Ser-164, His-190, and Asp-286.

Belongs to the CheB family. Phosphorylated by CheA. Phosphorylation of the N-terminal regulatory domain activates the methylesterase activity.

The protein resides in the cytoplasm. The catalysed reaction is [protein]-L-glutamate 5-O-methyl ester + H2O = L-glutamyl-[protein] + methanol + H(+). It carries out the reaction L-glutaminyl-[protein] + H2O = L-glutamyl-[protein] + NH4(+). Functionally, involved in chemotaxis. Part of a chemotaxis signal transduction system that modulates chemotaxis in response to various stimuli. Catalyzes the demethylation of specific methylglutamate residues introduced into the chemoreceptors (methyl-accepting chemotaxis proteins or MCP) by CheR. Also mediates the irreversible deamidation of specific glutamine residues to glutamic acid. The polypeptide is Protein-glutamate methylesterase/protein-glutamine glutaminase (Yersinia pestis bv. Antiqua (strain Antiqua)).